A 370-amino-acid chain; its full sequence is DNA replication and repair protein RecF (370 aa).

30–37 provides a ligand contact to ATP; the sequence is GENAQGKT.

This sequence belongs to the RecF family.

It localises to the cytoplasm. The RecF protein is involved in DNA metabolism; it is required for DNA replication and normal SOS inducibility. RecF binds preferentially to single-stranded, linear DNA. It also seems to bind ATP. This is DNA replication and repair protein RecF from Listeria monocytogenes serotype 4b (strain CLIP80459).